The primary structure comprises 309 residues: 4-hydroxy-3-methylbut-2-enyl diphosphate reductase (309 aa).

Residue cysteine 13 participates in [4Fe-4S] cluster binding. (2E)-4-hydroxy-3-methylbut-2-enyl diphosphate contacts are provided by histidine 42 and histidine 75. Dimethylallyl diphosphate is bound by residues histidine 42 and histidine 75. 2 residues coordinate isopentenyl diphosphate: histidine 42 and histidine 75. Cysteine 97 contacts [4Fe-4S] cluster. Histidine 125 is a (2E)-4-hydroxy-3-methylbut-2-enyl diphosphate binding site. Histidine 125 lines the dimethylallyl diphosphate pocket. Histidine 125 contributes to the isopentenyl diphosphate binding site. Catalysis depends on glutamate 127, which acts as the Proton donor. Threonine 165 lines the (2E)-4-hydroxy-3-methylbut-2-enyl diphosphate pocket. [4Fe-4S] cluster is bound at residue cysteine 195. Serine 223, serine 224, asparagine 225, and serine 267 together coordinate (2E)-4-hydroxy-3-methylbut-2-enyl diphosphate. The dimethylallyl diphosphate site is built by serine 223, serine 224, asparagine 225, and serine 267. Residues serine 223, serine 224, asparagine 225, and serine 267 each coordinate isopentenyl diphosphate.

It belongs to the IspH family. [4Fe-4S] cluster serves as cofactor.

The catalysed reaction is isopentenyl diphosphate + 2 oxidized [2Fe-2S]-[ferredoxin] + H2O = (2E)-4-hydroxy-3-methylbut-2-enyl diphosphate + 2 reduced [2Fe-2S]-[ferredoxin] + 2 H(+). The enzyme catalyses dimethylallyl diphosphate + 2 oxidized [2Fe-2S]-[ferredoxin] + H2O = (2E)-4-hydroxy-3-methylbut-2-enyl diphosphate + 2 reduced [2Fe-2S]-[ferredoxin] + 2 H(+). It participates in isoprenoid biosynthesis; dimethylallyl diphosphate biosynthesis; dimethylallyl diphosphate from (2E)-4-hydroxy-3-methylbutenyl diphosphate: step 1/1. The protein operates within isoprenoid biosynthesis; isopentenyl diphosphate biosynthesis via DXP pathway; isopentenyl diphosphate from 1-deoxy-D-xylulose 5-phosphate: step 6/6. In terms of biological role, catalyzes the conversion of 1-hydroxy-2-methyl-2-(E)-butenyl 4-diphosphate (HMBPP) into a mixture of isopentenyl diphosphate (IPP) and dimethylallyl diphosphate (DMAPP). Acts in the terminal step of the DOXP/MEP pathway for isoprenoid precursor biosynthesis. This chain is 4-hydroxy-3-methylbut-2-enyl diphosphate reductase, found in Chlamydia abortus (strain DSM 27085 / S26/3) (Chlamydophila abortus).